Consider the following 245-residue polypeptide: UPF0280 protein UNCMA_16740 (245 aa).

Belongs to the UPF0280 family.

This chain is UPF0280 protein UNCMA_16740, found in Methanocella arvoryzae (strain DSM 22066 / NBRC 105507 / MRE50).